Reading from the N-terminus, the 202-residue chain is LexA repressor (202 aa).

Positions 28 to 48 (RAEIAMRLGFRSPNAAEEHLK) form a DNA-binding region, H-T-H motif. Catalysis depends on for autocatalytic cleavage activity residues Ser119 and Lys156.

This sequence belongs to the peptidase S24 family. In terms of assembly, homodimer.

It catalyses the reaction Hydrolysis of Ala-|-Gly bond in repressor LexA.. In terms of biological role, represses a number of genes involved in the response to DNA damage (SOS response), including recA and lexA. Binds to the 16 bp palindromic sequence 5'-CTGTATATATATACAG-3'. In the presence of single-stranded DNA, RecA interacts with LexA causing an autocatalytic cleavage which disrupts the DNA-binding part of LexA, leading to derepression of the SOS regulon and eventually DNA repair. This is LexA repressor from Serratia proteamaculans (strain 568).